A 1125-amino-acid polypeptide reads, in one-letter code: Transient receptor potential cation channel subfamily A member 1 (1125 aa).

Topologically, residues methionine 1–histidine 721 are cytoplasmic. 9 ANK repeats span residues glutamate 63–valine 94, tyrosine 98–leucine 127, asparagine 131–leucine 161, asparagine 165–lysine 194, tryptophan 198–tyrosine 227, lysine 239–methionine 268, alanine 272–aspartate 301, asparagine 309–serine 338, and glutamate 342–isoleucine 371. 5 disulfides stabilise this stretch: cysteine 193–cysteine 666, cysteine 463–cysteine 666, cysteine 609–cysteine 622, cysteine 622–cysteine 666, and cysteine 634–cysteine 859. Position 395 is a 4-hydroxyproline; transient (proline 395). ANK repeat units follow at residues aspartate 413–serine 442, aspartate 446–leucine 475, histidine 482–serine 511, asparagine 514–aspartate 543, and glutamate 548–leucine 577. (E)-cinnamaldehyde contacts are provided by cysteine 415 and cysteine 422. Cysteine 622 is a binding site for (E)-cinnamaldehyde. Cysteine sulfenic acid (-SOH); transient; in hyperoxia is present on cysteine 634. 3 residues coordinate (E)-cinnamaldehyde: cysteine 642, cysteine 666, and lysine 712. The helical transmembrane segment at methionine 722 to isoleucine 742 threads the bilayer. The Extracellular portion of the chain corresponds to glutamine 743 to threonine 767. N-linked (GlcNAc...) asparagine glycans are attached at residues asparagine 749 and asparagine 755. The helical transmembrane segment at leucine 768 to tyrosine 788 threads the bilayer. Over cysteine 789–tyrosine 806 the chain is Cytoplasmic. Ca(2+) is bound by residues glutamate 791, glutamine 794, asparagine 808, and glutamate 811. The helical transmembrane segment at asparagine 807–leucine 827 threads the bilayer. Topologically, residues aspartate 828 to tyrosine 832 are extracellular. The chain crosses the membrane as a helical span at residues methionine 833–leucine 853. The Cytoplasmic segment spans residues glutamine 854–serine 876. Position 859 is a cysteine sulfenic acid (-SOH); transient; in hyperoxia (cysteine 859). Residues threonine 877–phenylalanine 897 form a helical membrane-spanning segment. The Extracellular segment spans residues glutamine 898 to proline 904. Positions leucine 905–phenylalanine 925 form an intramembrane region, pore-forming. The Extracellular segment spans residues leucine 926 to proline 937. The chain crosses the membrane as a helical span at residues valine 938–leucine 959. The Cytoplasmic portion of the chain corresponds to isoleucine 960–isoleucine 1125. A coiled-coil region spans residues methionine 1044–lysine 1073. Residue lysine 1048–lysine 1054 coordinates a 1,2-diacyl-sn-glycero-3-phospho-(1D-myo-inositol).

This sequence belongs to the transient receptor (TC 1.A.4) family. In terms of assembly, homotetramer. Interacts with TMEM100. Interacts with EGLN1. Interacts with the scorpion wasabi receptor toxin at the same site that electrophiles but in a non-covalent manner. In terms of processing, TRPA1 activation by electrophiles occurs though covalent modification of specific cysteine residues in the N-terminal cytoplasmic domain. Post-translationally, hydroxylation is required for TRPA1 activity inhibition in normoxia. In hypoxia, the decrease in oxygen concentration diminishes the activity of the hydroxylase EGLN1, thus relieving TRPA1 from inhibition and ultimately leading to channel activation. Oxidation of Cys-634 and Cys-859 in hyperoxia may override the hydroxylase EGLN1-mediated inhibition, causing TRPA1 activation. In terms of tissue distribution, specifically expressed in a subset of nociceptive neurons. Expressed in dorsal root ganglia.

Its subcellular location is the cell membrane. The catalysed reaction is Ca(2+)(in) = Ca(2+)(out). It carries out the reaction Mg(2+)(in) = Mg(2+)(out). It catalyses the reaction Na(+)(in) = Na(+)(out). The enzyme catalyses K(+)(in) = K(+)(out). The catalysed reaction is Zn(2+)(in) = Zn(2+)(out). Electrophilic ligands activate the channel by covalent modification of intracellular cysteines; Cys-622 plays a key role in covalent binding of electrophiles. Extracellular Ca(2+) both potentiates and inactivates TRPA1; a rapid potentiation follows by slow desensitization. Activated by increase in intracellular Ca(2+) concentration. Inhibited by ruthenium red, a potent blocker of TRPV channels and selectively by A-967079. Activated by benzyl isothiocyanate (BITC), iodoacetamide, sulfhydryl reactive agent MTSEA, N-methyl maleimide (NMM), N-ethylmaleimide (NEM), and 2-aminoethyldiphenylborinate (2-APB). Also activated by hyperoxia. Acivated by intracellular Zn(2+). TRPA1 activation may critically depend on the presence of small intracellular compounds such as polyphosphates. Ligand-activated Ca(2+)-permeable, nonselective cation channel. Involved in pain detection and possibly also in cold perception, oxygen concentration perception, cough, itch, and inner ear function. Has a relatively high Ca(2+) selectivity, with a preference for divalent over monovalent cations (Ca(2+) &gt; Ba(2+) &gt; Mg(2+) &gt; NH4(+) &gt; Li(+) &gt; K(+)), the influx of cation into the cytoplasm, leads to membrane depolarization. Has a central role in the pain response to endogenous inflammatory mediators, such as bradykinin and to a diverse array of irritants. Activated by a large variety of structurally unrelated electrophilic and non-electrophilic chemical compounds, such as allylthiocyanate (AITC) from mustard oil or wasabi, cinnamaldehyde, diallyl disulfide (DADS) from garlic, and acrolein, an environmental irritant. Electrophilic ligands activate TRPA1 by interacting with critical N-terminal Cys residues in a covalent manner. Non-electrophile agonists bind at distinct sites in the transmembrane domain to promote channel activation. Also acts as an ionotropic cannabinoid receptor by being activated by delta(9)-tetrahydrocannabinol (THC), the psychoactive component of marijuana. May be a component for the mechanosensitive transduction channel of hair cells in inner ear, thereby participating in the perception of sounds. The polypeptide is Transient receptor potential cation channel subfamily A member 1 (Rattus norvegicus (Rat)).